Here is a 794-residue protein sequence, read N- to C-terminus: Interphotoreceptor matrix proteoglycan 1 (794 aa).

A signal peptide spans 1 to 20; the sequence is MHLEAARVIFFLWIFLQVQG. The span at 202 to 213 shows a compositional bias: polar residues; sequence MTTAQRNPQLHP. Disordered regions lie at residues 202 to 221, 314 to 355, and 413 to 449; these read MTTA…RVPT, KGKA…LYPT, and SPEL…AMTS. Residues 236–357 form the SEA 1 domain; that stretch reads LEQKVELSIS…KQRELYPTAS (122 aa). A compositionally biased stretch (basic and acidic residues) spans 332 to 351; sequence NKIESEGDPRGTTEEEKQRE. O-linked (GalNAc...) threonine glycosylation is found at T425 and T439. S443 carries O-linked (GalNAc...) serine glycosylation. T448 and T450 each carry an O-linked (GalNAc...) threonine glycan. The SEA 2 domain occupies 579-692; it reads RELVVFFSLR…YSLDVEPADQ (114 aa). The N-linked (GlcNAc...) asparagine glycan is linked to N624. Positions 629 to 637 match the Heparin- and hyaluronan-binding motif; it reads KQLEILNFR. N656 carries an N-linked (GlcNAc...) asparagine glycan.

Highly glycosylated (N- and O-linked carbohydrates and sialic acid).

The protein localises to the cell projection. Its subcellular location is the cilium. It localises to the photoreceptor outer segment. It is found in the secreted. The protein resides in the extracellular space. The protein localises to the extracellular matrix. Its subcellular location is the interphotoreceptor matrix. It localises to the photoreceptor inner segment. Its function is as follows. Chondroitin sulfate-, heparin- and hyaluronan-binding protein. May serve to form a basic macromolecular scaffold comprising the insoluble interphotoreceptor matrix. The sequence is that of Interphotoreceptor matrix proteoglycan 1 (IMPG1) from Bos taurus (Bovine).